The chain runs to 302 residues: Glutaminase (302 aa).

Positions 61, 111, 155, 162, 186, 238, and 256 each coordinate substrate.

It belongs to the glutaminase family. Homotetramer.

It catalyses the reaction L-glutamine + H2O = L-glutamate + NH4(+). The protein is Glutaminase of Pseudomonas paraeruginosa (strain DSM 24068 / PA7) (Pseudomonas aeruginosa (strain PA7)).